The sequence spans 119 residues: Membrane-anchored ubiquitin-fold protein 3 (119 aa).

One can recognise a Ubiquitin-like domain in the interval 8–76; sequence IEVKFRLFDG…NNRTLAESRV (69 aa). Cysteine methyl ester is present on cysteine 116. Cysteine 116 is lipidated: S-geranylgeranyl cysteine. A propeptide spans 117-119 (removed in mature form); the sequence is TIL.

Its subcellular location is the cell membrane. Its function is as follows. May serve as docking site to facilitate the association of other proteins to the plasma membrane. This is Membrane-anchored ubiquitin-fold protein 3 (MUB3) from Oryza sativa subsp. japonica (Rice).